The following is an 870-amino-acid chain: DNA mismatch repair protein MutS (870 aa).

ATP is bound at residue Gly-621 to Ser-628. Residues Gly-813–Leu-834 are disordered.

Belongs to the DNA mismatch repair MutS family.

Its function is as follows. This protein is involved in the repair of mismatches in DNA. It is possible that it carries out the mismatch recognition step. This protein has a weak ATPase activity. The chain is DNA mismatch repair protein MutS from Pelobacter propionicus (strain DSM 2379 / NBRC 103807 / OttBd1).